Consider the following 603-residue polypeptide: Probable potassium transport system protein Kup (603 aa).

12 consecutive transmembrane segments (helical) span residues 15–35, 43–63, 94–114, 135–155, 163–183, 209–229, 244–264, 283–303, 336–356, 365–385, 390–410, and 415–435; these read GLVF…IFLL, IIGV…VEYA, VAFV…DGVI, NIGQ…LFSV, ITWV…FSGI, GIIG…GEAL, AWRF…AFLI, ILYI…SQAM, IYIS…MLIF, AYGL…TSIF, NITK…FLLS, and IPHG…LILI.

The protein belongs to the HAK/KUP transporter (TC 2.A.72) family.

Its subcellular location is the cell membrane. The enzyme catalyses K(+)(in) + H(+)(in) = K(+)(out) + H(+)(out). Transport of potassium into the cell. Likely operates as a K(+):H(+) symporter. In Methanosarcina barkeri (strain Fusaro / DSM 804), this protein is Probable potassium transport system protein Kup.